A 458-amino-acid polypeptide reads, in one-letter code: MITGDSIDGMDFISSLPDEILHHILSSVPTKSAIRTSLLSKRWRYVWSETPSLSIDCRRADPNSIDKTLSFFSAPKITSFHLHTTLLNRIDSVNGCIEFAISHNAEKLSLESRDYRVRNYKFPDFFYTNSSVKQLFVDSGSVHLIPRCTVSWTSLKNLSLSNCTLSDESFLKILSGSPLLESLELLYCAEYMCLDLSQSQHLRRLEIDRSDWFMGPTKIVAPHLHCLRLRHSRLPCSLVDVSSLTEADLNIYFGDLKTVTAGFLQHNVVKMLQMLQNVEKLTIGGTFLQMLSLAALCGVPFPTLKVKTLTLETMIIRSVIPGITKLLRYTPGLRKLTIHTVKCSSISELHLNDYLRKHSLNQRQCWRSKDSVFPGSLETISMLASKHAESNLVALFMERLLKSTKSLETMVVLLVDYLDALGFEELLAMATTLSHNNDVSVLIKRSYIKYVSNTFPQR.

In terms of domain architecture, F-box spans 10–56 (MDFISSLPDEILHHILSSVPTKSAIRTSLLSKRWRYVWSETPSLSID). LRR repeat units lie at residues 57–84 (CRRA…HLHT), 86–112 (LLNR…SLES), 133–161 (KQLF…LSLS), 162–187 (NCTL…ELLY), 226–251 (CLRL…DLNI), 260–285 (TAGF…TIGG), 325–353 (KLLR…HLND), and 389–414 (ESNL…VVLL).

The chain is F-box/LRR-repeat protein At5g02910 from Arabidopsis thaliana (Mouse-ear cress).